The following is a 396-amino-acid chain: Cathepsin D (396 aa).

Positions 1-18 (MKFLYLFLFAVFAWTSDA) are cleaved as a signal peptide. A propeptide spans 19–61 (IVRIPLKKFRSIRRTLSDSGLNVEQLLAGTNSLQHNQGFPSSN) (activation peptide). One can recognise a Peptidase A1 domain in the interval 76-393 (YYGEIGLGTP…DRESNRVGFA (318 aa)). Aspartate 94 is an active-site residue. Cysteine 107 and cysteine 114 are oxidised to a cystine. A glycan (N-linked (GlcNAc...) asparagine) is linked at asparagine 131. Residues cysteine 272 and cysteine 276 are joined by a disulfide bond. Residue aspartate 281 is part of the active site. An intrachain disulfide couples cysteine 315 to cysteine 352.

This sequence belongs to the peptidase A1 family. In terms of assembly, monomer.

It is found in the lysosome. It carries out the reaction Specificity similar to, but narrower than, that of pepsin A. Does not cleave the 4-Gln-|-His-5 bond in B chain of insulin.. With respect to regulation, inhibited by pepstatin. Its function is as follows. Acid protease active in intracellular protein breakdown. The polypeptide is Cathepsin D (ctsd) (Clupea harengus (Atlantic herring)).